A 505-amino-acid chain; its full sequence is 2,3-bisphosphoglycerate-independent phosphoglycerate mutase (505 aa).

Residues Asp-13 and Ser-63 each contribute to the Mn(2+) site. Ser-63 (phosphoserine intermediate) is an active-site residue. Residues His-124, 153–154, Arg-183, Arg-189, 254–257, and Lys-330 contribute to the substrate site; these read RD and RADR. 5 residues coordinate Mn(2+): Asp-396, His-400, Asp-437, His-438, and His-456.

It belongs to the BPG-independent phosphoglycerate mutase family. Monomer. Requires Mn(2+) as cofactor.

It catalyses the reaction (2R)-2-phosphoglycerate = (2R)-3-phosphoglycerate. It participates in carbohydrate degradation; glycolysis; pyruvate from D-glyceraldehyde 3-phosphate: step 3/5. In terms of biological role, catalyzes the interconversion of 2-phosphoglycerate and 3-phosphoglycerate. The protein is 2,3-bisphosphoglycerate-independent phosphoglycerate mutase of Dinoroseobacter shibae (strain DSM 16493 / NCIMB 14021 / DFL 12).